The chain runs to 194 residues: Orotate phosphoribosyltransferase (194 aa).

116-124 (EDIVTTGLS) provides a ligand contact to 5-phospho-alpha-D-ribose 1-diphosphate. Positions 120 and 148 each coordinate orotate.

The protein belongs to the purine/pyrimidine phosphoribosyltransferase family. PyrE subfamily. In terms of assembly, homodimer. Requires Mg(2+) as cofactor.

It catalyses the reaction orotidine 5'-phosphate + diphosphate = orotate + 5-phospho-alpha-D-ribose 1-diphosphate. Its pathway is pyrimidine metabolism; UMP biosynthesis via de novo pathway; UMP from orotate: step 1/2. Its function is as follows. Catalyzes the transfer of a ribosyl phosphate group from 5-phosphoribose 1-diphosphate to orotate, leading to the formation of orotidine monophosphate (OMP). This is Orotate phosphoribosyltransferase from Caulobacter vibrioides (strain ATCC 19089 / CIP 103742 / CB 15) (Caulobacter crescentus).